A 388-amino-acid chain; its full sequence is Beta-1,4-galactosyltransferase 5 (388 aa).

Over 1-14 the chain is Cytoplasmic; sequence MRARRGLLRLPRRS. Residues 15 to 35 form a helical; Signal-anchor for type II membrane protein membrane-spanning segment; sequence LLAALFFFSLSSSLLYFVYVA. At 36–388 the chain is on the lumenal side; the sequence is PGIVNTYLFM…TPELAQVTEY (353 aa). N77, N81, N90, and N128 each carry an N-linked (GlcNAc...) asparagine glycan. Residues C114 and C158 are joined by a disulfide bond. Residues 169-173, 208-210, 235-236, Y264, and W296 each bind UDP-alpha-D-galactose; these read PFRNR, FNR, and VD. C229 and C248 are joined by a disulfide. D236 is a binding site for Mn(2+). 298-301 contributes to the N-acetyl-D-glucosamine binding site; the sequence is GEDD. H329 provides a ligand contact to Mn(2+). A UDP-alpha-D-galactose-binding site is contributed by 329-330; the sequence is HH. R340 serves as a coordination point for N-acetyl-D-glucosamine. N-linked (GlcNAc...) asparagine glycosylation is found at N360, N364, and N373.

It belongs to the glycosyltransferase 7 family. Mn(2+) serves as cofactor. Highest levels in heart, brain, liver and kidney with lower levels in spleen, lung and testis.

Its subcellular location is the golgi apparatus. The protein resides in the golgi stack membrane. The catalysed reaction is a beta-D-glucosyl-(1&lt;-&gt;1')-N-acylsphing-4-enine + UDP-alpha-D-galactose = a beta-D-Gal-(1-&gt;4)-beta-D-Glc-(1&lt;-&gt;1)-Cer(d18:1(4E)) + UDP + H(+). It functions in the pathway protein modification; protein glycosylation. The protein operates within sphingolipid metabolism. Functionally, catalyzes the synthesis of lactosylceramide (LacCer) via the transfer of galactose from UDP-galactose to glucosylceramide (GlcCer). LacCer is the starting point in the biosynthesis of all gangliosides (membrane-bound glycosphingolipids) which play pivotal roles in the CNS including neuronal maturation and axonal and myelin formation. Plays a role in the glycosylation of BMPR1A and regulation of its protein stability. Essential for extraembryonic development during early embryogenesis. The protein is Beta-1,4-galactosyltransferase 5 of Mus musculus (Mouse).